We begin with the raw amino-acid sequence, 450 residues long: Thiamine biosynthesis regulatory protein (450 aa).

Residues 1-12 are compositionally biased toward basic residues; the sequence is MVNSKRQQRSKK. The tract at residues 1-23 is disordered; sequence MVNSKRQQRSKKVASSSKVPPTK. Over residues 13-23 the composition is skewed to low complexity; that stretch reads VASSSKVPPTK. A DNA-binding region (zn(2)-C6 fungal-type) is located at residues 30 to 57; the sequence is CWACRFKKRRCDENRPICSLCAKHGDNC. Residues 210 to 234 form a disordered region; sequence TDQLPSPGHSMSSAEETTTAALSSP.

It is found in the nucleus. Its function is as follows. Positive regulator of thiamine biosynthesis. This is Thiamine biosynthesis regulatory protein (THI2) from Saccharomyces cerevisiae (strain ATCC 204508 / S288c) (Baker's yeast).